The sequence spans 374 residues: MSLMDNWKTDMESYDEGGLVANPNFEVLATFRYDPGFARQSASKKEIFETPDPRLGLRDEDIRQQIINEDYSSYLRVREVNSGGDLLENIQHPDAWKHDCKTIVCQRVEDMLQVIYERFFLLDEQYQRIRIALSYFKIDFSTSLNDLLKLLVENLINCKEGNSEYHEKIQKMINERQCYKMRVLVSKTGDIRIEAIPMPMEPILKLTTDYDSVSTYFIKTMLNGFLIDSTINWDVVVSSEPLNASAFTSFKTTSRDHYARARVRMQTAINNLRGSEPTSSVSQCEILFSNKSGLLMEGSITNVAVIQKDPNGSKKYVTPRLATGCLCGTMRHYLLRLGLIEEGDIDIGSLTVGNEVLLFNGVMGCIKGTVKTKY.

Belongs to the class-IV pyridoxal-phosphate-dependent aminotransferase family. As to quaternary structure, homodimer. It depends on pyridoxal 5'-phosphate as a cofactor.

The protein resides in the cytoplasm. It carries out the reaction 4-amino-4-deoxychorismate = 4-aminobenzoate + pyruvate + H(+). The protein operates within cofactor biosynthesis; tetrahydrofolate biosynthesis; 4-aminobenzoate from chorismate: step 2/2. Functionally, converts 4-amino-4-deoxychorismate into 4-aminobenzoate (PABA) and pyruvate. This Saccharomyces cerevisiae (strain ATCC 204508 / S288c) (Baker's yeast) protein is Aminodeoxychorismate lyase (ABZ2).